The chain runs to 446 residues: ATP synthase subunit b-delta (446 aa).

The interval 1 to 168 (MSTFIGQLFG…PATADVDYPL (168 aa)) is ATP synthase subunit b. Residues 4–24 (FIGQLFGFAVIVYLVWRFIVP) form a helical membrane-spanning segment. The tract at residues 169–446 (LAKMRSASRR…LAAAEARLPD (278 aa)) is ATP synthase subunit delta.

It in the N-terminal section; belongs to the ATPase B chain family. This sequence in the C-terminal section; belongs to the ATPase delta chain family. As to quaternary structure, F-type ATPases have 2 components, F(1) - the catalytic core - and F(0) - the membrane proton channel. F(1) has five subunits: alpha(3), beta(3), gamma(1), delta(1), epsilon(1). F(0) has three main subunits: a(1), b(2) and c(10-14). The alpha and beta chains form an alternating ring which encloses part of the gamma chain. F(1) is attached to F(0) by a central stalk formed by the gamma and epsilon chains, while a peripheral stalk is formed by the delta and b chains.

It is found in the cell membrane. F(1)F(0) ATP synthase produces ATP from ADP in the presence of a proton or sodium gradient. F-type ATPases consist of two structural domains, F(1) containing the extramembraneous catalytic core and F(0) containing the membrane proton channel, linked together by a central stalk and a peripheral stalk. During catalysis, ATP synthesis in the catalytic domain of F(1) is coupled via a rotary mechanism of the central stalk subunits to proton translocation. In terms of biological role, this fusion protein includes a component of the F(0) channel (subunit b) and of the F(1) subunit (subunit delta). Two copies of subunit b and one of delta together form the peripheral 'stator' stalk which links F(1) to F(0). The chain is ATP synthase subunit b-delta (atpFH) from Mycobacterium tuberculosis (strain CDC 1551 / Oshkosh).